The primary structure comprises 146 residues: DNA utilization protein HofO (146 aa).

A helical membrane pass occupies residues 20–37 (WAFWLLMLVTLIFLSSTH).

It is found in the cell inner membrane. Its function is as follows. Required for the use of extracellular DNA as a nutrient. The chain is DNA utilization protein HofO (hofO) from Escherichia coli (strain K12).